Here is a 403-residue protein sequence, read N- to C-terminus: L-cysteine:1D-myo-inositol 2-amino-2-deoxy-alpha-D-glucopyranoside ligase (403 aa).

Residue Cys43 coordinates Zn(2+). L-cysteinyl-5'-AMP is bound by residues 43–46 (CGIT), Thr58, 81–83 (NVT), and Trp223. The 'HIGH' region signature appears at 45 to 55 (ITPYDATHLGH). Cys227 is a Zn(2+) binding site. Residue 245 to 247 (GAD) participates in L-cysteinyl-5'-AMP binding. His252 serves as a coordination point for Zn(2+). Val278 serves as a coordination point for L-cysteinyl-5'-AMP. Residues 284-288 (KMSKS) carry the 'KMSKS' region motif.

It belongs to the class-I aminoacyl-tRNA synthetase family. MshC subfamily. As to quaternary structure, monomer. Requires Zn(2+) as cofactor.

The enzyme catalyses 1D-myo-inositol 2-amino-2-deoxy-alpha-D-glucopyranoside + L-cysteine + ATP = 1D-myo-inositol 2-(L-cysteinylamino)-2-deoxy-alpha-D-glucopyranoside + AMP + diphosphate + H(+). Its function is as follows. Catalyzes the ATP-dependent condensation of GlcN-Ins and L-cysteine to form L-Cys-GlcN-Ins. In Acidothermus cellulolyticus (strain ATCC 43068 / DSM 8971 / 11B), this protein is L-cysteine:1D-myo-inositol 2-amino-2-deoxy-alpha-D-glucopyranoside ligase.